Reading from the N-terminus, the 562-residue chain is 3-hydroxy-3-methylglutaryl-coenzyme A reductase 2 (562 aa).

2 helical membrane-spanning segments follow: residues 32 to 56 (ALPL…YFLL) and 77 to 100 (ICAL…DLIF). Residues 101–146 (RSSSDDDVWVNDGMIPCNQSLDCREVLPIKPNSVDPPRESELDSVE) form a linker region. Residue Asn-118 is glycosylated (N-linked (GlcNAc...) asparagine). Residues 147-562 (DEEIVKLVID…DIGPSSQVNR (416 aa)) form a catalytic region. Residue Glu-240 is the Charge relay system of the active site. The N-linked (GlcNAc...) asparagine glycan is linked to Asn-304. Catalysis depends on charge relay system residues Lys-372 and Asp-448. Residue His-544 is the Proton donor of the active site. A glycan (N-linked (GlcNAc...) asparagine) is linked at Asn-548. Residue Ser-550 is modified to Phosphoserine.

The protein belongs to the HMG-CoA reductase family. As to expression, restricted to young seedlings, roots, and inflorescences. Expressed in root tips, shoot apex, secretory zone of the stigma, microspores, mature pollen grains, gynoecium vascular tissue and fertilized ovules.

Its subcellular location is the endoplasmic reticulum membrane. The enzyme catalyses (R)-mevalonate + 2 NADP(+) + CoA = (3S)-3-hydroxy-3-methylglutaryl-CoA + 2 NADPH + 2 H(+). Its pathway is metabolic intermediate biosynthesis; (R)-mevalonate biosynthesis; (R)-mevalonate from acetyl-CoA: step 3/3. With respect to regulation, regulated at the post-translational level in response to alterations of the sphingolipid and the sterol biosynthetic pathways. Its function is as follows. Catalyzes the synthesis of mevalonate. The specific precursor of all isoprenoid compounds present in plants. The protein is 3-hydroxy-3-methylglutaryl-coenzyme A reductase 2 (HMG2) of Arabidopsis thaliana (Mouse-ear cress).